We begin with the raw amino-acid sequence, 1400 residues long: DNA-directed RNA polymerase subunit beta' (1400 aa).

4 residues coordinate Zn(2+): Cys71, Cys73, Cys86, and Cys89. 3 residues coordinate Mg(2+): Asp462, Asp464, and Asp466. The Zn(2+) site is built by Cys810, Cys884, Cys891, and Cys894. A disordered region spans residues 1378-1400 (EKQATIVPPAAPEAEPLALPPAE).

Belongs to the RNA polymerase beta' chain family. As to quaternary structure, the RNAP catalytic core consists of 2 alpha, 1 beta, 1 beta' and 1 omega subunit. When a sigma factor is associated with the core the holoenzyme is formed, which can initiate transcription. Requires Mg(2+) as cofactor. The cofactor is Zn(2+).

The catalysed reaction is RNA(n) + a ribonucleoside 5'-triphosphate = RNA(n+1) + diphosphate. In terms of biological role, DNA-dependent RNA polymerase catalyzes the transcription of DNA into RNA using the four ribonucleoside triphosphates as substrates. This Rhodopseudomonas palustris (strain BisB5) protein is DNA-directed RNA polymerase subunit beta'.